We begin with the raw amino-acid sequence, 179 residues long: Cell division protein SepF (179 aa).

The segment at 22-53 (LPYEKRDEPVFTPVNSSQEPALPMNQPSQSVG) is disordered. The segment covering 34 to 53 (PVNSSQEPALPMNQPSQSVG) has biased composition (polar residues).

It belongs to the SepF family. As to quaternary structure, homodimer. Interacts with FtsZ.

Its subcellular location is the cytoplasm. Functionally, cell division protein that is part of the divisome complex and is recruited early to the Z-ring. Probably stimulates Z-ring formation, perhaps through the cross-linking of FtsZ protofilaments. Its function overlaps with FtsA. The protein is Cell division protein SepF of Streptococcus pneumoniae (strain P1031).